We begin with the raw amino-acid sequence, 73 residues long: uncharacterized protein (73 aa).

This is an uncharacterized protein from Treponema pallidum (strain Nichols).